The sequence spans 25 residues: Galactose-binding lectin-2 (25 aa).

Homodimer. N-glycosylated.

Its function is as follows. D-galactose specific lectin. Binds in decreasing order of affinity: melibiose, N-acetyllactosamine, D-galacturonic acid, D-galactose, methyl-alpha-D-galactoside, D-galactose, methyl-alpha-D-galactopyranoside, methyl-beta-D-galactopyranoside and lactose. Binds also the glycoproteins globotriose, asialofetuin and mucin. Possesses glycan-dependent cytotoxic activity against Burkitt's lymphoma Raji cells and erythroleukemia K562 cells. Has calcium-independent hemagglutinating activity towards human erythrocytes. The chain is Galactose-binding lectin-2 from Aplysia kurodai (Kuroda's sea hare).